Here is a 239-residue protein sequence, read N- to C-terminus: Small ribosomal subunit protein uS2 (239 aa).

This sequence belongs to the universal ribosomal protein uS2 family.

The sequence is that of Small ribosomal subunit protein uS2 from Francisella tularensis subsp. tularensis (strain FSC 198).